Here is a 281-residue protein sequence, read N- to C-terminus: Bifunctional protein FolD (281 aa).

Residues 165–167 (GRG), T192, and V233 each bind NADP(+).

Belongs to the tetrahydrofolate dehydrogenase/cyclohydrolase family. Homodimer.

It catalyses the reaction (6R)-5,10-methylene-5,6,7,8-tetrahydrofolate + NADP(+) = (6R)-5,10-methenyltetrahydrofolate + NADPH. The enzyme catalyses (6R)-5,10-methenyltetrahydrofolate + H2O = (6R)-10-formyltetrahydrofolate + H(+). It participates in one-carbon metabolism; tetrahydrofolate interconversion. Its function is as follows. Catalyzes the oxidation of 5,10-methylenetetrahydrofolate to 5,10-methenyltetrahydrofolate and then the hydrolysis of 5,10-methenyltetrahydrofolate to 10-formyltetrahydrofolate. The protein is Bifunctional protein FolD of Mycobacterium ulcerans (strain Agy99).